The following is a 104-amino-acid chain: Large ribosomal subunit protein bL21 (104 aa).

This sequence belongs to the bacterial ribosomal protein bL21 family. Part of the 50S ribosomal subunit. Contacts protein L20.

Functionally, this protein binds to 23S rRNA in the presence of protein L20. The chain is Large ribosomal subunit protein bL21 from Tropheryma whipplei (strain TW08/27) (Whipple's bacillus).